The primary structure comprises 175 residues: Major oleosin NAP-II (175 aa).

Positions 1-47 are polar; it reads RRDQYPRDRDQYSMIGRDRDKYSMIGRDRDQYNMYGRDYSKSRQIAK. 2 consecutive repeats follow at residues 17–26 and 27–36; these read RDRDKYSMIG and RDRDQYNMYG. The tract at residues 48–119 is hydrophobic; it reads AVTAVTAGGS…AAITVFSWIY (72 aa). 3 helical membrane-spanning segments follow: residues 56 to 76, 78 to 98, and 99 to 119; these read GSLL…LTVA, PLLV…ALLI, and TGFL…SWIY. Residues 151–175 form a disordered region; the sequence is AQYYGQQQTGGEDDRDRTRGTQHTT.

Belongs to the oleosin family.

It is found in the lipid droplet. The protein localises to the membrane. May have a structural role to stabilize the lipid body during desiccation of the seed by preventing coalescence of the oil. Probably interacts with both lipid and phospholipid moieties of lipid bodies. May also provide recognition signals for specific lipase anchorage in lipolysis during seedling growth. The protein is Major oleosin NAP-II of Brassica napus (Rape).